The primary structure comprises 847 residues: Zinc transporter ZIP10 (847 aa).

The signal sequence occupies residues 1 to 26; it reads MMRVHTHTRLCFLCVLTLLYHQCSHC. The segment at 136-374 is disordered; it reads GRHSHSAGHP…RREVPGSPAH (239 aa). Residues 162-171 show a composition bias toward basic and acidic residues; it reads HHENEEHTLA. Polar residues predominate over residues 179–188; it reads TLGTGATPPS. Residues 190-269 are compositionally biased toward basic and acidic residues; it reads SEEHDHDHEH…QEHNDLSDQN (80 aa). Basic residues-rich tracts occupy residues 270 to 285 and 314 to 330; these read HHHH…HPHL and TRRH…RGRN. N385 carries an N-linked (GlcNAc...) asparagine glycan. Transmembrane regions (helical) follow at residues 447-467, 474-494, and 529-549; these read FVSI…VPIL, FLLT…ALLH, and GLTA…IGMF. The interval 613–676 is disordered; sequence ELQPLDSPSK…HSHHGHCHSD (64 aa). Positions 629 to 646 are enriched in basic and acidic residues; sequence DSDHPYEAPVKTEEDNVP. The span at 648–672 shows a compositional bias: basic residues; it reads AKSKKHGHGHGHGHGHGHGHSHHGH. 4 helical membrane-spanning segments follow: residues 705 to 725, 750 to 770, 779 to 799, and 817 to 837; these read AIGA…VAVF, IVYN…GTAV, SWIF…DMLP, and FVLQ…IAIF.

This sequence belongs to the ZIP transporter (TC 2.A.5) family. Undergoes N-terminal ectodomain shedding.

Its subcellular location is the cell membrane. The protein localises to the apical cell membrane. It carries out the reaction Zn(2+)(in) = Zn(2+)(out). Functionally, zinc-influx transporter. When associated with slc39a6, the heterodimer slc39a10/slc39a6 has a functional role in epithelial-mesenchymal transition (EMT) during embryonic development. Slc39a10/slc39a6 heterodimers play also an essentiel role in initiating mitosis by importing zinc into cells to initiate a pathway resulting in the onset of mitosis. When associated with slc39a6, the heterodimer controls Ncam1 phosphorylation and integration into focal adhesion complexes during EMT. This is Zinc transporter ZIP10 from Danio rerio (Zebrafish).